Reading from the N-terminus, the 59-residue chain is UPF0434 protein Noc_2677 (59 aa).

Belongs to the UPF0434 family.

The polypeptide is UPF0434 protein Noc_2677 (Nitrosococcus oceani (strain ATCC 19707 / BCRC 17464 / JCM 30415 / NCIMB 11848 / C-107)).